The chain runs to 99 residues: Acylphosphatase-2 (99 aa).

Ser-2 is modified (N-acetylserine). The 91-residue stretch at Ser-9 to Tyr-99 folds into the Acylphosphatase-like domain. Active-site residues include Arg-24 and Asn-42. At Ser-93 the chain carries Phosphoserine.

The protein belongs to the acylphosphatase family.

It catalyses the reaction an acyl phosphate + H2O = a carboxylate + phosphate + H(+). Its physiological role is not yet clear. This is Acylphosphatase-2 (ACYP2) from Bos taurus (Bovine).